Consider the following 344-residue polypeptide: tRNA N6-adenosine threonylcarbamoyltransferase (344 aa).

Positions 119 and 123 each coordinate Fe cation. Residues 141-145, Asp-174, Gly-187, Asp-191, and Asn-280 each bind substrate; that span reads VVSGG. Asp-310 is a binding site for Fe cation.

Belongs to the KAE1 / TsaD family. It depends on Fe(2+) as a cofactor.

Its subcellular location is the cytoplasm. It catalyses the reaction L-threonylcarbamoyladenylate + adenosine(37) in tRNA = N(6)-L-threonylcarbamoyladenosine(37) in tRNA + AMP + H(+). Required for the formation of a threonylcarbamoyl group on adenosine at position 37 (t(6)A37) in tRNAs that read codons beginning with adenine. Is involved in the transfer of the threonylcarbamoyl moiety of threonylcarbamoyl-AMP (TC-AMP) to the N6 group of A37, together with TsaE and TsaB. TsaD likely plays a direct catalytic role in this reaction. This Listeria monocytogenes serotype 4b (strain CLIP80459) protein is tRNA N6-adenosine threonylcarbamoyltransferase.